A 349-amino-acid chain; its full sequence is Green-sensitive opsin-1 (349 aa).

Over Met1 to Lys36 the chain is Extracellular. Residues Asn2 and Asn15 are each glycosylated (N-linked (GlcNAc...) asparagine). The chain crosses the membrane as a helical span at residues Phe37–Val61. Over Thr62–Asn73 the chain is Cytoplasmic. Residues Tyr74–Leu99 traverse the membrane as a helical segment. Residues Val100–Glu113 lie on the Extracellular side of the membrane. Residues Cys110 and Cys187 are joined by a disulfide bond. The chain crosses the membrane as a helical span at residues Gly114–Ile133. At Glu134–His152 the chain is on the cytoplasmic side. The chain crosses the membrane as a helical span at residues Ala153 to Ser176. Residues Arg177–Ser202 are Extracellular-facing. N-linked (GlcNAc...) asparagine glycosylation occurs at Asn200. The helical transmembrane segment at Tyr203–Val230 threads the bilayer. Residues Lys231–Arg252 are Cytoplasmic-facing. A helical transmembrane segment spans residues Met253 to Phe276. Over Phe277–Ser284 the chain is Extracellular. Residues Ala285–Leu309 traverse the membrane as a helical segment. Lys296 is subject to N6-(retinylidene)lysine. The Cytoplasmic portion of the chain corresponds to Asn310–Ala349. The interval Leu328 to Ala349 is disordered. Residues Ser334–Ala349 are compositionally biased toward low complexity.

The protein belongs to the G-protein coupled receptor 1 family. Opsin subfamily. In terms of processing, phosphorylated on some or all of the serine and threonine residues present in the C-terminal region. Retinal double cone accessory photoreceptor cell outer segments.

It is found in the membrane. Visual pigments are the light-absorbing molecules that mediate vision. They consist of an apoprotein, opsin, covalently linked to cis-retinal. In Danio rerio (Zebrafish), this protein is Green-sensitive opsin-1 (opn1mw1).